The sequence spans 231 residues: Small proline-rich protein 3 (231 aa).

The interval 1–104 (MSSYQQKQPF…GSGYSVVPQP (104 aa)) is disordered. Ser2 carries the N-acetylserine modification. Repeat copies occupy residues 55–62 (EQGYVKIP), 63–70 (EQGSIKVP), 71–78 (DTGYTKIP), 79–86 (DSGNTKVP), 87–94 (ESGCTSVP), 95–102 (GSGYSVVP), 103–110 (QPGYTKVP), 111–118 (DQGYTKVP), 119–126 (ESGCTSVP), 127–134 (GSGYSVVP), 135–142 (QPGYTKVP), 143–150 (ESGCTSVP), 151–158 (GPGYPTVP), 159–166 (QPGYTKVP), 167–174 (ESGCTSVP), 175–182 (GSGYSVIP), 183–190 (QPSYTKVP), 191–198 (ESGCTSVP), 199–206 (GPGYPTVP), 207–214 (QPGYTKVQ), and 215–222 (EPNPSIVT). The interval 55–222 (EQGYVKIPEQ…VQEPNPSIVT (168 aa)) is 21 X 8 AA approximate tandem repeats. The segment covering 80-94 (SGNTKVPESGCTSVP) has biased composition (polar residues). Positions 188-231 (KVPESGCTSVPGPGYPTVPQPGYTKVQEPNPSIVTPGLSQKKTK) are disordered. A compositionally biased stretch (polar residues) spans 214–231 (QEPNPSIVTPGLSQKKTK).

The protein belongs to the cornifin (SPRR) family. In terms of tissue distribution, suprabasal layers of the squamous epithelia of esophagus, tongue and oral mucosa.

Its subcellular location is the cytoplasm. In terms of biological role, can serve as a substrate in transglutaminase-catalyzed cross linking reactions and can function as a cross-linked envelope precursor. In Oryctolagus cuniculus (Rabbit), this protein is Small proline-rich protein 3 (SPRR3).